We begin with the raw amino-acid sequence, 109 residues long: Nucleoid-associated protein HD_0326 (109 aa).

It belongs to the YbaB/EbfC family. In terms of assembly, homodimer.

The protein localises to the cytoplasm. It localises to the nucleoid. Functionally, binds to DNA and alters its conformation. May be involved in regulation of gene expression, nucleoid organization and DNA protection. The polypeptide is Nucleoid-associated protein HD_0326 (Haemophilus ducreyi (strain 35000HP / ATCC 700724)).